A 438-amino-acid chain; its full sequence is Coenzyme A disulfide reductase (438 aa).

Residue 8-33 (GAVAGGATCASQIRRLDKESDIIIFE) coordinates FAD. Substrate is bound by residues Thr15, Gln19, Arg22, Ser39, and Asn42. Residue Cys43 is the Nucleophile of the active site. Cys43 (redox-active) is an active-site residue. Residue Lys71 participates in substrate binding. 151-166 (VLVVGAGYVSLEVLEN) is a binding site for NADP(+). 267 to 277 (TNVPNIYVIGD) is a binding site for FAD. His299 provides a ligand contact to substrate. Residue Tyr419 participates in FAD binding. A substrate-binding site is contributed by Lys427.

It belongs to the class-III pyridine nucleotide-disulfide oxidoreductase family. As to quaternary structure, homodimer. It depends on FAD as a cofactor.

The enzyme catalyses NADP(+) + 2 CoA = CoA-disulfide + NADPH + H(+). Its function is as follows. Catalyzes specifically the NADPH-dependent reduction of coenzyme A disulfide. This is Coenzyme A disulfide reductase from Staphylococcus aureus (strain MRSA252).